The sequence spans 87 residues: MPNIASASKRLRQNEVRNLYNRKIKSFLNTQKKKVIKAVDSNDKNLASEEFKKYASALDKAARKSVIHANRAAAKKSDMMKKINAMN.

The protein belongs to the bacterial ribosomal protein bS20 family.

Functionally, binds directly to 16S ribosomal RNA. This Brachyspira hyodysenteriae (strain ATCC 49526 / WA1) protein is Small ribosomal subunit protein bS20.